A 537-amino-acid polypeptide reads, in one-letter code: Ribonuclease Y (537 aa).

Residues 4–24 traverse the membrane as a helical segment; it reads FPIIMSVFAAIIGLVIGYVSV. The segment at 112–148 is disordered; that stretch reads ASTLDRKDDNLSNKEKALEQKEQSLSDKSKHIDAREE. The 61-residue stretch at 227 to 287 folds into the KH domain; the sequence is TNSTVHLPDD…IRREIARMTM (61 aa). In terms of domain architecture, HD spans 353–446; the sequence is VLRHSIEVAK…VAAADALSAA (94 aa).

It belongs to the RNase Y family.

The protein localises to the cell membrane. Endoribonuclease that initiates mRNA decay. The sequence is that of Ribonuclease Y from Streptococcus sanguinis (strain SK36).